Consider the following 452-residue polypeptide: cAMP-dependent protein kinase regulatory subunit (452 aa).

Residues 28 to 212 (QFCANYFNSK…ELSKTLGSNF (185 aa)) form a dimerization and phosphorylation region. The segment at 74 to 163 (IMTTNKRQPS…APPVPKSKIP (90 aa)) is disordered. Positions 75–84 (MTTNKRQPSF) are enriched in polar residues. Residues 95-106 (SIDHHHDDDPKE) are compositionally biased toward basic and acidic residues. A Phosphoserine modification is found at serine 173. A nucleoside 3',5'-cyclic phosphate contacts are provided by residues 213–330 (LFRQ…FLKD) and 333–451 (VLSS…QGSS). 3',5'-cyclic AMP-binding residues include glutamate 278, arginine 287, glutamate 399, and arginine 408.

This sequence belongs to the cAMP-dependent kinase regulatory chain family. In terms of assembly, tetramer, composed of 2 regulatory (R) and 2 catalytic (C) subunits. In the presence of cAMP it dissociates into 2 active monomeric C subunits and an R dimer.

This chain is cAMP-dependent protein kinase regulatory subunit (PKAR), found in Debaryomyces hansenii (strain ATCC 36239 / CBS 767 / BCRC 21394 / JCM 1990 / NBRC 0083 / IGC 2968) (Yeast).